A 28-amino-acid polypeptide reads, in one-letter code: Potassium channel toxin alpha-KTx 9.3 (28 aa).

Intrachain disulfides connect cysteine 3–cysteine 19, cysteine 6–cysteine 24, and cysteine 10–cysteine 26.

The protein belongs to the short scorpion toxin superfamily. Potassium channel inhibitor family. Alpha-KTx 09 subfamily. As to expression, expressed by the venom gland.

The protein localises to the secreted. In terms of biological role, inhibits voltage-gated potassium channels. In Aegaeobuthus nigrocinctus (Scorpion), this protein is Potassium channel toxin alpha-KTx 9.3.